Reading from the N-terminus, the 250-residue chain is Small ribosomal subunit protein uS5 (250 aa).

Polar residues predominate over residues Met-1–Gln-22. The disordered stretch occupies residues Met-1–Val-40. Residues Phe-45 to Val-108 enclose the S5 DRBM domain.

The protein belongs to the universal ribosomal protein uS5 family. Part of the 30S ribosomal subunit. Contacts proteins S4 and S8.

With S4 and S12 plays an important role in translational accuracy. In terms of biological role, located at the back of the 30S subunit body where it stabilizes the conformation of the head with respect to the body. The sequence is that of Small ribosomal subunit protein uS5 from Mycoplasma capricolum subsp. capricolum (strain California kid / ATCC 27343 / NCTC 10154).